A 255-amino-acid chain; its full sequence is Type III pantothenate kinase (255 aa).

Asp-6–Asp-13 provides a ligand contact to ATP. Substrate is bound at residue Gly-107–Leu-110. Asp-109 (proton acceptor) is an active-site residue. Asp-129 is a binding site for K(+). Position 132 (Thr-132) interacts with ATP. Position 183 (Thr-183) interacts with substrate.

It belongs to the type III pantothenate kinase family. In terms of assembly, homodimer. Requires NH4(+) as cofactor. The cofactor is K(+).

Its subcellular location is the cytoplasm. It catalyses the reaction (R)-pantothenate + ATP = (R)-4'-phosphopantothenate + ADP + H(+). The protein operates within cofactor biosynthesis; coenzyme A biosynthesis; CoA from (R)-pantothenate: step 1/5. Catalyzes the phosphorylation of pantothenate (Pan), the first step in CoA biosynthesis. This Dictyoglomus turgidum (strain DSM 6724 / Z-1310) protein is Type III pantothenate kinase.